Reading from the N-terminus, the 291-residue chain is Lipoyl synthase (291 aa).

Positions 36, 41, 47, 62, 66, 69, and 275 each coordinate [4Fe-4S] cluster. A Radical SAM core domain is found at 48 to 264 (FSKKTATFLI…KEFAISIGFK (217 aa)).

The protein belongs to the radical SAM superfamily. Lipoyl synthase family. [4Fe-4S] cluster serves as cofactor.

The protein localises to the cytoplasm. The enzyme catalyses [[Fe-S] cluster scaffold protein carrying a second [4Fe-4S](2+) cluster] + N(6)-octanoyl-L-lysyl-[protein] + 2 oxidized [2Fe-2S]-[ferredoxin] + 2 S-adenosyl-L-methionine + 4 H(+) = [[Fe-S] cluster scaffold protein] + N(6)-[(R)-dihydrolipoyl]-L-lysyl-[protein] + 4 Fe(3+) + 2 hydrogen sulfide + 2 5'-deoxyadenosine + 2 L-methionine + 2 reduced [2Fe-2S]-[ferredoxin]. It participates in protein modification; protein lipoylation via endogenous pathway; protein N(6)-(lipoyl)lysine from octanoyl-[acyl-carrier-protein]: step 2/2. Catalyzes the radical-mediated insertion of two sulfur atoms into the C-6 and C-8 positions of the octanoyl moiety bound to the lipoyl domains of lipoate-dependent enzymes, thereby converting the octanoylated domains into lipoylated derivatives. This Caldicellulosiruptor bescii (strain ATCC BAA-1888 / DSM 6725 / KCTC 15123 / Z-1320) (Anaerocellum thermophilum) protein is Lipoyl synthase.